A 39-amino-acid chain; its full sequence is Mu-theraphotoxin-Ae1a (39 aa).

Intrachain disulfides connect cysteine 7–cysteine 21, cysteine 14–cysteine 26, and cysteine 20–cysteine 33. Phenylalanine 39 bears the Phenylalanine amide mark.

Belongs to the neurotoxin 10 (Hwtx-1) family. 47 subfamily. Expressed by the venom gland.

The protein localises to the secreted. Insecticidal toxin that acts, at least partially, by inhibiting insect voltage-gated sodium (NaV) channels of several insect species. The toxin binds to the voltage sensor in NaV channel domain II and inhibits channel opening by shifting the threshold for channel activation to more positive voltages. The toxin binding is sensitive to residues in the S1-S2 loop of the domain II voltage sensor. In vivo, the recombinant toxin causes paralysis and/or death to two dipteran species (Lucilia cuprina and Drosophila melanogaster). In contrast, the toxin does not show paralytic or lethal effect on the cotton bollworm Helicoverpa armigera and the triatomine bug Rhodinius prolixus. The polypeptide is Mu-theraphotoxin-Ae1a (Augacephalus ezendami (Mozambique baboon spider)).